The chain runs to 356 residues: Tyrosine recombinase XerS (356 aa).

The region spanning 16–121 is the Core-binding (CB) domain; it reads VMPWYVLDYY…ALSSLYKYLT (106 aa). The Tyr recombinase domain maps to 169 to 354; the sequence is AFLDYVDKEY…VNDEQKNALD (186 aa). Residues Arg-210, Lys-234, His-306, Arg-309, and His-332 contribute to the active site. Tyr-341 functions as the O-(3'-phospho-DNA)-tyrosine intermediate in the catalytic mechanism.

The protein belongs to the 'phage' integrase family. XerS subfamily.

The protein resides in the cytoplasm. FtsK is required for recombination. Functionally, site-specific tyrosine recombinase, which acts by catalyzing the cutting and rejoining of the recombining DNA molecules. Essential to convert dimers of the bacterial chromosome into monomers to permit their segregation at cell division. The protein is Tyrosine recombinase XerS of Streptococcus pyogenes serotype M28 (strain MGAS6180).